A 164-amino-acid polypeptide reads, in one-letter code: CB1 cannabinoid receptor-interacting protein 1 (164 aa).

This sequence belongs to the CNRIP family. In terms of assembly, interacts with the cannabinoid receptor CNR1 (via C-terminus). Does not interact with cannabinoid receptor CNR2.

In terms of biological role, suppresses cannabinoid receptor CNR1-mediated tonic inhibition of voltage-gated calcium channels. In Rattus norvegicus (Rat), this protein is CB1 cannabinoid receptor-interacting protein 1 (Cnrip1).